We begin with the raw amino-acid sequence, 3966 residues long: MAHSCRWRFPARPGTTGGGGGGGRRGLGGAPRQRVPALLLPPGPQAGGGGPGAPPSPPAVAAAAAGSSGAGVPGGAAAASAASSSSASSSSSSSSSASSGPALLRVGPGFDAALQVSAAIGTNLRRFRAVFGESGGGGGSGEDEQFLGFGSDEEVRVRSPTRSPSVKASPRKPRGRPRSGSDRNPAILSDPSVFSPLNKSETKSADKIKKKDSKSIEKKRGRPPTFPGVKIKITHGKDIAELTQGSKEDSLKKVKRTPSAMFQQATKIKKLRAGKLSPLKSKFKTGKLQIGRKGVQIVRRRGRPPSTERIKTPSGLLINSELEKPQKVRKDKEGTPPLTKEDKTVVRQSPRRIKPVRIIPSCKRTDATIAKQLLQRAKKGAQKKIEKEAAQLQGRKVKTQVKNIRQFIMPVVSAISSRIIKTPRRFIEDEDYDPPMKIARLESTPNSRFSATSCGSSEKSSAASQHSSQMSSDSSRSSSPSIDTTSDSQASEEIQALPEERSNTPEVHTPLPISQSPENESNDRRSRRYSMSERSFGSRATKKLPTLQSAPQQQTSSSPPPPLLTPPPPLQPASGISDHTPWLMPPTIPLASPFLPASAAPMQGKRKSILREPTFRWTSLKHSRSEPQYFSSAKYAKEGLIRKPIFDNFRPPPLTPEDVGFASGFSASGTAASARLFSPLHSGTRFDIHKRSPILRAPRFTPSEAHSRIFESVTLPSNRTSSGASSSGVSNRKRKRKVFSPIRSEPRSPSHSMRTRSGRLSTSELSPLTPPSSVSSSLSIPVSPLAASALNPTFTFPSHSLTQSGESTEKNQRARKQTSALAEPFSSNSPALFPWFTPGSQTEKGRKKDTAPEELSKDRDADKSVEKDKSRERDREREKENKRESRKEKRKKGSDIQSSSALYPVGRVSKEKVAGEDVGTSSSAKKATGRKKSSSLDSGADVAPVTLGDTTAVKAKILIKKGRGNLEKNNLDLGPAAPSLEKERTPCLSAPSSSTVKHSTSSIGSMLAQADKLPMTDKRVASLLKKAKAQLCKIEKSKSLKQTDQPKAQGQESDSSETSVRGPRIKHVCRRAAVALGRKRAVFPDDMPTLSALPWEEREKILSSMGNDDKSSVAGSEDAEPLAPPIKPIKPVTRNKAPQEPPVKKGRRSRRCGQCPGCQVPEDCGICTNCLDKPKFGGRNIKKQCCKMRKCQNLQWMPSKASLQKQTKAVKKKEKKSKTTEKKESKESTAVKSPLEPAQKAAPPPREEPAPKKSSSEPPPRKPVEEKSEEGGAPAPAPAPEPKQVSAPASRKSSKQVSQPAAVVPPQPPSTAPQKKEAPKAVPSEPKKKQPPPPEPGPEQSKQKKVAPRPSIPVKQKPKDKEKPPPVSKQENAGTLNILNPLSNGISSKQKIPADGVHRIRVDFKEDCEAENVWEMGGLGILTSVPITPRVVCFLCASSGHVEFVYCQVCCEPFHKFCLEENERPLEDQLENWCCRRCKFCHVCGRQHQATKQLLECNKCRNSYHPECLGPNYPTKPTKKKKVWICTKCVRCKSCGSTTPGKGWDAQWSHDFSLCHDCAKLFAKGNFCPLCDKCYDDDDYESKMMQCGKCDRWVHSKCESLSGTEDEMYEILSNLPESVAYTCVNCTERHPAEWRLALEKELQASLKQVLTALLNSRTTSHLLRYRQAAKPPDLNPETEESIPSRSSPEGPDPPVLTEVSKQDEQQPLDLEGVKKRMDQGSYVSVLEFSDDIVKIIQAAINSDGGQPEIKKANSMVKSFFIRQMERVFPWFSVKKSRFWEPNKVSNNSGMLPNAVLPPSLDHNYAQWQEREESSHTEQPPLMKKIIPAPKPKGPGEPDSPTPLHPPTPPILSTDRSREDSPELNPPPGIDDNRQCALCLMYGDDSANDAGRLLYIGQNEWTHVNCALWSAEVFEDDDGSLKNVHMAVIRGKQLRCEFCQKPGATVGCCLTSCTSNYHFMCSRAKNCVFLDDKKVYCQRHRDLIKGEVVPENGFEVFRRVFVDFEGISLRRKFLNGLEPENIHMMIGSMTIDCLGILNDLSDCEDKLFPIGYQCSRVYWSTTDARKRCVYTCKIMECRPPVVEPDINSTVEHDDNRTIAHSPSSFIDASCKDSQSTAAILSPPSPDRPHSQTSGSCYYHVISKVPRIRTPSYSPTQRSPGCRPLPSAGSPTPTTHEIVTVGDPLLSSGLRSIGSRRHSTSSLSPLRSKLRIMSPVRTGSAYSRSSVSSVPSLGTATDPEASAKASDRGGLLSSSANLGHSAPPSSSSQRTVGGSKTSHLDGSSPSEVKRCSASDLVPKGSLVKGEKNRTSSSKSTDGSAHSTAYPGIPKLTPQVHNATPGELNISKIGSFAEPSTVPFSSKDTVSYPQLHLRGQRSDRDQHMDPSQSVKPSPNEDGEIKTLKLPGMGHRPSILHEHIGSSSRDRRQKGKKSSKETCKEKHSSKSYLEPGQVTTGEEGNLKPEFADEVLTPGFLGQRPCNNVSSEKIGDKVLPLSGVPKGQSTQVEGSSKELQAPRKCSVKVTPLKMEGENQSKNTQKESGPGSPAHIESVCPAEPVSASRSPGAGPGVQPSPNNTLSQDPQSNNYQNLPEQDRNLMIPDGPKPQEDGSFKRRYPRRSARARSNMFFGLTPLYGVRSYGEEDIPFYSNSTGKKRGKRSAEGQVDGADDLSTSDEDDLYYYNFTRTVISSGGEERLASHNLFREEEQCDLPKISQLDGVDDGTESDTSVTATSRKSSQIPKRNGKENGTENLKIDRPEDAGEKEHVIKSAVGHKNEPKLDNCHSVSRVKAQGQDSLEAQLSSLESSRRVHTSTPSDKNLLDTYNAELLKSDSDNNNSDDCGNILPSDIMDFVLKNTPSMQALGESPESSSSELLTLGEGLGLDSNREKDIGLFEVFSQQLPATEPVDSSVSSSISAEEQFELPLELPSDLSVLTTRSPTVPSQNPSRLAVISDSGEKRVTITEKSVASSEGDPALLSPGVDPAPEGHMTPDHFIQGHMDADHISSPPCGSVEQGHGNSQDLTRNSGTPGLQVPVSPTVPVQNQKYVPSSTDSPGPSQISNAAVQTTPPHLKPATEKLIVVNQNMQPLYVLQTLPNGVTQKIQLTSPVSSTPSVMETNTSVLGPMGSGLTLTTGLNPSLPPSPSLFPPASKGLLSVPHHQHLHSFPAAAQSSFPPNISSPPSGLLIGVQPPPDPQLLGSEANQRTDLTTTVATPSSGLKKRPISRLHTRKNKKLAPSSAPSNIAPSDVVSNMTLINFTPSQLSNHPSLLDLGSLNPSSHRTVPNIIKRSKSGIMYFEQAPLLPPQSVGGTAATAAGSSTISQDTSHLTSGPVSALASGSSVLNVVSMQTTAAPTSSTSVPGHVTLANQRLLGTPDIGSISHLLIKASHQSLGIQDQPVALPPSSGMFPQLGTSQTPSAAAMTAASSICVLPSSQTAGMTAASPPGEAEEHYKLQRGNQLLAGKTGTLTSQRDRDPDSAPGTQPSNFTQTAEAPNGVRLEQNKTLPSAKPASSASPGSSPSSGQQSGSSSVPGPTKPKPKAKRIQLPLDKGSGKKHKVSHLRTSSEAHIPHRDTDPAPQPSVTRTPRANREQQDAAGVEQPSQKECGQPAGPVAALPEVQATQNPANEQENAEPKAMEEEESGFSSPLMLWLQQEQKRKESITERKPKKGLVFEISSDDGFQICAESIEDAWKSLTDKVQEARSNARLKQLSFAGVNGLRMLGILHDAVVFLIEQLAGAKHCRNYKFRFHKPEEANEPPLNPHGSARAEVHLRQSAFDMFNFLASKHRQPPEYNPNDEEEEEVQLKSARRATSMDLPMPMRFRHLKKTSKEAVGVYRSPIHGRGLFCKRNIDAGEMVIEYAGNVIRSIQTDKREKYYDSKGIGCYMFRIDDSEVVDATMHGNAARFINHSCEPNCYSRVINIDGQKHIVIFAMRKIYRGEELTYDYKFPIEDASNKLPCNCGAKKCRKFLN.

2 disordered regions span residues 1–106 and 130–231; these read MAHS…LLRV and VFGE…GVKI. Positions 6–25 match the Menin-binding motif (MBM) motif; the sequence is RWRFPARPGTTGGGGGGGRR. Residues 15–29 show a composition bias toward gly residues; the sequence is TTGGGGGGGRRGLGG. A compositionally biased stretch (low complexity) spans 75 to 102; that stretch reads GAAAASAASSSSASSSSSSSSSASSGPA. The Integrase domain-binding motif 1 (IBM1) signature appears at 121–132; it reads GTNLRRFRAVFG. Residues Ser-134 and Ser-140 each carry the phosphoserine; by CK2 modification. The short motif at 145–150 is the Integrase domain-binding motif 2 (IBM2) element; it reads QFLGFG. At Ser-151 the chain carries Phosphoserine. Positions 167 to 178 form a DNA-binding region, a.T hook 1; that stretch reads KASPRKPRGRPR. Ser-195 carries the post-translational modification Phosphoserine. Over residues 200 to 218 the composition is skewed to basic and acidic residues; the sequence is SETKSADKIKKKDSKSIEK. A DNA-binding region (a.T hook 2) is located at residues 215-225; sequence SIEKKRGRPPT. The residue at position 237 (Lys-237) is an N6-acetyllysine. The segment at residues 299 to 307 is a DNA-binding region (a.T hook 3); it reads RRRGRPPST. The tract at residues 322-343 is disordered; sequence LEKPQKVRKDKEGTPPLTKEDK. Lys-371 is modified (N6-acetyllysine). A disordered region spans residues 440–590; that stretch reads RLESTPNSRF…PWLMPPTIPL (151 aa). The span at 450–489 shows a compositional bias: low complexity; sequence SATSCGSSEKSSAASQHSSQMSSDSSRSSSPSIDTTSDSQ. Ser-516 carries the phosphoserine modification. A compositionally biased stretch (low complexity) spans 544–557; sequence LPTLQSAPQQQTSS. The span at 558-571 shows a compositional bias: pro residues; that stretch reads SPPPPLLTPPPPLQ. Lys-634 is subject to N6-acetyllysine. Ser-678 is subject to Phosphoserine. Disordered regions lie at residues 711–943, 963–1003, 1034–1064, and 1101–1161; these read ESVT…ADVA, RGNL…TSSI, IEKS…RGPR, and ILSS…CQVP. 2 stretches are compositionally biased toward low complexity: residues 717–730 and 760–790; these read SNRT…SGVS and LSTS…ASAL. 2 stretches are compositionally biased toward polar residues: residues 791–806 and 817–830; these read NPTF…QSGE and QTSA…SNSP. Thr-837 is subject to Phosphothreonine. The segment covering 843–887 has biased composition (basic and acidic residues); it reads EKGRKKDTAPEELSKDRDADKSVEKDKSRERDREREKENKRESRK. Ser-923 is subject to Phosphoserine. Low complexity predominate over residues 989-1003; the sequence is SAPSSSTVKHSTSSI. A compositionally biased stretch (polar residues) spans 1040 to 1059; sequence LKQTDQPKAQGQESDSSETS. Ser-1053 is subject to Phosphoserine. Positions 1101 to 1111 are enriched in basic and acidic residues; sequence ILSSMGNDDKS. Lys-1127 is subject to N6-acetyllysine. Residues 1144–1192 form a CXXC-type zinc finger; the sequence is KKGRRSRRCGQCPGCQVPEDCGICTNCLDKPKFGGRNIKKQCCKMRKCQ. Residues Cys-1152, Cys-1155, Cys-1158, Cys-1164, Cys-1167, Cys-1170, Cys-1186, and Cys-1191 each contribute to the Zn(2+) site. Positions 1196-1390 are disordered; sequence WMPSKASLQK…PLSNGISSKQ (195 aa). A compositionally biased stretch (basic and acidic residues) spans 1217-1229; that stretch reads SKTTEKKESKEST. Residues 1230–1241 are compositionally biased toward low complexity; that stretch reads AVKSPLEPAQKA. The residue at position 1232 (Lys-1232) is an N6-acetyllysine. The span at 1245–1270 shows a compositional bias: basic and acidic residues; the sequence is PREEPAPKKSSSEPPPRKPVEEKSEE. Residues 1369–1390 show a composition bias toward polar residues; it reads KQENAGTLNILNPLSNGISSKQ. PHD-type zinc fingers lie at residues 1430 to 1481, 1478 to 1532, and 1565 to 1629; these read RVVC…CKFC, CKFC…CVRC, and GNFC…CTER. Residues 1583-1599 are interaction with histone H3K4me3; that stretch reads KMMQCGKCDRWVHSKCE. One can recognise a Bromo domain in the interval 1637 to 1767; it reads ALEKELQASL…SFFIRQMERV (131 aa). Disordered stretches follow at residues 1665–1714 and 1807–1870; these read YRQA…EGVK and WQER…PGID. Residues 1828-1849 show a composition bias toward pro residues; it reads APKPKGPGEPDSPTPLHPPTPP. Ser-1839 carries the phosphoserine modification. Thr-1847 carries the phosphothreonine modification. Ser-1860 is modified (phosphoserine). The segment at 1872-1912 adopts a C2HC pre-PHD-type zinc-finger fold; the sequence is NRQCALCLMYGDDSANDAGRLLYIGQNEWTHVNCALWSAEV. The PHD-type 4 zinc-finger motif lies at 1933–1980; that stretch reads LRCEFCQKPGATVGCCLTSCTSNYHFMCSRAKNCVFLDDKKVYCQRHR. In terms of domain architecture, FYR N-terminal spans 2020–2076; sequence NIHMMIGSMTIDCLGILNDLSDCEDKLFPIGYQCSRVYWSTTDARKRCVYTCKIMEC. Residue Ser-2100 is modified to Phosphoserine. The tract at residues 2147-2174 is disordered; sequence RTPSYSPTQRSPGCRPLPSAGSPTPTTH. Residue Thr-2148 is modified to Phosphothreonine. 2 positions are modified to phosphoserine: Ser-2152 and Ser-2202. Disordered regions lie at residues 2214-2339, 2371-2619, 2639-2673, and 2709-2759; these read VRTG…ATPG, RGQR…SARA, EDIP…SDED, and KISQ…DAGE. Residues 2218-2230 are compositionally biased toward low complexity; it reads SAYSRSSVSSVPS. Polar residues-rich tracts occupy residues 2250–2284 and 2308–2320; these read LSSS…SSPS and TSSS…SAHS. Composition is skewed to basic and acidic residues over residues 2411–2422 and 2430–2440; these read ILHEHIGSSSRD and SSKETCKEKHS. A compositionally biased stretch (polar residues) spans 2498–2509; that stretch reads GQSTQVEGSSKE. Lys-2524 participates in a covalent cross-link: Glycyl lysine isopeptide (Lys-Gly) (interchain with G-Cter in SUMO2). Residues 2528 to 2537 are compositionally biased toward polar residues; sequence ENQSKNTQKE. The residue at position 2560 (Ser-2560) is a Phosphoserine. The span at 2569-2588 shows a compositional bias: polar residues; the sequence is PSPNNTLSQDPQSNNYQNLP. Ser-2607 carries the post-translational modification Phosphoserine. Positions 2609 to 2618 are enriched in basic residues; the sequence is KRRYPRRSAR. Residues 2663 to 2673 show a composition bias toward acidic residues; sequence GADDLSTSDED. The span at 2722–2737 shows a compositional bias: polar residues; that stretch reads SDTSVTATSRKSSQIP. The span at 2740-2759 shows a compositional bias: basic and acidic residues; that stretch reads NGKENGTENLKIDRPEDAGE. Residue Ser-2792 is modified to Phosphoserine. A 9aaTAD motif is present at residues 2843 to 2851; sequence SDIMDFVLK. Ser-2951 carries the post-translational modification Phosphoserine. Lys-2954 carries the post-translational modification N6-acetyllysine. Disordered regions lie at residues 2958 to 3060 and 3164 to 3239; these read ITEK…NAAV and AAQS…PSNI. Positions 3012-3025 are enriched in polar residues; it reads HGNSQDLTRNSGTP. Ser-3032 bears the Phosphoserine mark. The span at 3035–3060 shows a compositional bias: polar residues; the sequence is VPVQNQKYVPSSTDSPGPSQISNAAV. Residues 3167-3178 are compositionally biased toward low complexity; that stretch reads SSFPPNISSPPS. The segment covering 3196–3212 has biased composition (polar residues); it reads EANQRTDLTTTVATPSS. Positions 3214-3229 are enriched in basic residues; that stretch reads LKKRPISRLHTRKNKK. The residue at position 3369 (Thr-3369) is a Phosphothreonine. The residue at position 3459 (Lys-3459) is an N6-acetyllysine. Residues 3462–3640 are disordered; sequence TLTSQRDRDP…AMEEEESGFS (179 aa). Residues 3475-3487 show a composition bias toward polar residues; the sequence is PGTQPSNFTQTAE. Residues 3501-3528 are compositionally biased toward low complexity; that stretch reads PSAKPASSASPGSSPSSGQQSGSSSVPG. Phosphoserine is present on residues Ser-3510 and Ser-3523. Residues 3558 to 3570 are compositionally biased toward basic and acidic residues; it reads TSSEAHIPHRDTD. Residues 3663 to 3744 form the FYR C-terminal domain; that stretch reads KKGLVFEISS…KHCRNYKFRF (82 aa). The WDR5 interaction motif (WIN) signature appears at 3759-3764; that stretch reads GSARAE. The segment at 3782–3805 is disordered; the sequence is HRQPPEYNPNDEEEEEVQLKSARR. Residues 3826–3942 enclose the SET domain; sequence EAVGVYRSPI…RGEELTYDYK (117 aa). Positions 3836 and 3838 each coordinate S-adenosyl-L-methionine. An S-methylcysteine; by autocatalysis modification is found at Cys-3879. Residues Tyr-3880 and 3903–3904 each bind S-adenosyl-L-methionine; that span reads NH. Residues Cys-3906 and Cys-3954 each contribute to the Zn(2+) site. In terms of domain architecture, Post-SET spans 3950–3966; the sequence is NKLPCNCGAKKCRKFLN. Asn-3955 contributes to the S-adenosyl-L-methionine binding site. Zn(2+) contacts are provided by Cys-3956 and Cys-3961.

Belongs to the class V-like SAM-binding methyltransferase superfamily. Histone-lysine methyltransferase family. TRX/MLL subfamily. As to quaternary structure, MLL cleavage product N320 heterodimerizes with MLL cleavage product C180 (via SET and FYRC domains). Component of some MLL1/MLL complex, at least composed of the core components KMT2A/MLL1, ASH2L, HCFC1/HCF1, HCFC2, WDR5, DPY30 and RBBP5, as well as the facultative components BACC1, CHD8, E2F6, HSP70, INO80C, KANSL1, LAS1L, MAX, MCRS1, MEN1, MGA, KAT8/MOF, PELP1, PHF20, PRP31, RING2, RUVB1/TIP49A, RUVB2/TIP49B, SENP3, TAF1, TAF4, TAF6, TAF7, TAF9 and TEX10. Interacts (via WIN motif) with WDR5; the interaction is direct. Interaction with WDR5 is required for stable interaction with ASH2L and RBBP5, and thereby also for optimal histone methyltransferase activity. Interacts with KAT8/MOF; the interaction is direct. Interacts with SBF1 and PPP1R15A. Interacts with ZNF335. Interacts with CLOCK and BMAL1 in a circadian manner. Interacts with PPIE; this results in decreased histone H3 methyltransferase activity. Interacts with CREBBP. Interacts with the WRAD complex composed of WDR5, RBBP5, ASH2L and DPY30. Interacts (via MBM motif) with MEN1. Interacts (via IBM motifs) with PSIP1 (via IBD domain) with moderate affinity whereas the KMT2A-MEN1 complex interacts with a greater affinity; MEN1 enhances interaction of KMT2A with PSIP1. Phosphorylation increases its affinity for PSIP1. Forms a complex with CREBBP and CREB1. Post-translationally, proteolytic cleavage by TASP1 generates MLL cleavage 3product N320 and MLL cleavage product C180, which reassemble through a non-covalent association. 2 cleavage sites exist, cleavage site 1 (CS1) and cleavage site 2 (CS2), to generate MLL cleavage products N320 and C180. CS2 is the major site. In terms of processing, phosphorylation increases its interaction with PSIP1. Auto-methylated at Cys-3879: auto-methylation is inhibited by the WRAD complex and unmodified histone H3.

It is found in the nucleus. It catalyses the reaction L-lysyl(4)-[histone H3] + S-adenosyl-L-methionine = N(6)-methyl-L-lysyl(4)-[histone H3] + S-adenosyl-L-homocysteine + H(+). The catalysed reaction is N(6)-methyl-L-lysyl(4)-[histone H3] + S-adenosyl-L-methionine = N(6),N(6)-dimethyl-L-lysyl(4)-[histone H3] + S-adenosyl-L-homocysteine + H(+). It carries out the reaction L-cysteinyl-[protein] + S-adenosyl-L-methionine = S-methyl-L-cysteinyl-[protein] + S-adenosyl-L-homocysteine + H(+). Functionally, histone methyltransferase that plays an essential role in early development and hematopoiesis. Catalytic subunit of the MLL1/MLL complex, a multiprotein complex that mediates both methylation of 'Lys-4' of histone H3 (H3K4me) complex and acetylation of 'Lys-16' of histone H4 (H4K16ac). Catalyzes methyl group transfer from S-adenosyl-L-methionine to the epsilon-amino group of 'Lys-4' of histone H3 (H3K4) via a non-processive mechanism. Part of chromatin remodeling machinery predominantly forms H3K4me1 and H3K4me2 methylation marks at active chromatin sites where transcription and DNA repair take place. Has weak methyltransferase activity by itself, and requires other component of the MLL1/MLL complex to obtain full methyltransferase activity. Has no activity toward histone H3 phosphorylated on 'Thr-3', less activity toward H3 dimethylated on 'Arg-8' or 'Lys-9', while it has higher activity toward H3 acetylated on 'Lys-9'. Binds to unmethylated CpG elements in the promoter of target genes and helps maintain them in the nonmethylated state. Required for transcriptional activation of HOXA9. Promotes PPP1R15A-induced apoptosis. Plays a critical role in the control of circadian gene expression and is essential for the transcriptional activation mediated by the CLOCK-BMAL1 heterodimer. Establishes a permissive chromatin state for circadian transcription by mediating a rhythmic methylation of 'Lys-4' of histone H3 (H3K4me) and this histone modification directs the circadian acetylation at H3K9 and H3K14 allowing the recruitment of CLOCK-BMAL1 to chromatin. Also has auto-methylation activity on Cys-3879 in absence of histone H3 substrate. This Mus musculus (Mouse) protein is Histone-lysine N-methyltransferase 2A (Kmt2a).